The following is a 264-amino-acid chain: Thymidylate synthase (264 aa).

R21 contributes to the dUMP binding site. H51 contributes to the (6R)-5,10-methylene-5,6,7,8-tetrahydrofolate binding site. Residue 126-127 (RR) coordinates dUMP. C146 acts as the Nucleophile in catalysis. Residues 166–169 (RSAD), N177, and 207–209 (HIY) each bind dUMP. Residue D169 participates in (6R)-5,10-methylene-5,6,7,8-tetrahydrofolate binding. A263 is a binding site for (6R)-5,10-methylene-5,6,7,8-tetrahydrofolate.

This sequence belongs to the thymidylate synthase family. Bacterial-type ThyA subfamily. As to quaternary structure, homodimer.

It is found in the cytoplasm. The catalysed reaction is dUMP + (6R)-5,10-methylene-5,6,7,8-tetrahydrofolate = 7,8-dihydrofolate + dTMP. It participates in pyrimidine metabolism; dTTP biosynthesis. Its function is as follows. Catalyzes the reductive methylation of 2'-deoxyuridine-5'-monophosphate (dUMP) to 2'-deoxythymidine-5'-monophosphate (dTMP) while utilizing 5,10-methylenetetrahydrofolate (mTHF) as the methyl donor and reductant in the reaction, yielding dihydrofolate (DHF) as a by-product. This enzymatic reaction provides an intracellular de novo source of dTMP, an essential precursor for DNA biosynthesis. The polypeptide is Thymidylate synthase (Rhizobium meliloti (strain 1021) (Ensifer meliloti)).